A 359-amino-acid chain; its full sequence is Probable dual-specificity RNA methyltransferase RlmN (359 aa).

Glutamate 91 acts as the Proton acceptor in catalysis. The Radical SAM core domain maps to 97–329; it reads QHYGHSVCVT…KKNGVNCVVR (233 aa). Cysteine 104 and cysteine 340 are disulfide-bonded. Cysteine 111, cysteine 115, and cysteine 118 together coordinate [4Fe-4S] cluster. S-adenosyl-L-methionine-binding positions include 163 to 164, serine 195, 218 to 220, and asparagine 296; these read GE and SLH. Cysteine 340 functions as the S-methylcysteine intermediate in the catalytic mechanism.

It belongs to the radical SAM superfamily. RlmN family. It depends on [4Fe-4S] cluster as a cofactor.

The protein localises to the cytoplasm. The enzyme catalyses adenosine(2503) in 23S rRNA + 2 reduced [2Fe-2S]-[ferredoxin] + 2 S-adenosyl-L-methionine = 2-methyladenosine(2503) in 23S rRNA + 5'-deoxyadenosine + L-methionine + 2 oxidized [2Fe-2S]-[ferredoxin] + S-adenosyl-L-homocysteine. It carries out the reaction adenosine(37) in tRNA + 2 reduced [2Fe-2S]-[ferredoxin] + 2 S-adenosyl-L-methionine = 2-methyladenosine(37) in tRNA + 5'-deoxyadenosine + L-methionine + 2 oxidized [2Fe-2S]-[ferredoxin] + S-adenosyl-L-homocysteine. Its function is as follows. Specifically methylates position 2 of adenine 2503 in 23S rRNA and position 2 of adenine 37 in tRNAs. In Streptococcus pyogenes serotype M5 (strain Manfredo), this protein is Probable dual-specificity RNA methyltransferase RlmN.